Reading from the N-terminus, the 158-residue chain is NAD(P)H-quinone oxidoreductase subunit J, chloroplastic (158 aa).

Belongs to the complex I 30 kDa subunit family. In terms of assembly, NDH is composed of at least 16 different subunits, 5 of which are encoded in the nucleus.

Its subcellular location is the plastid. The protein resides in the chloroplast thylakoid membrane. The catalysed reaction is a plastoquinone + NADH + (n+1) H(+)(in) = a plastoquinol + NAD(+) + n H(+)(out). It catalyses the reaction a plastoquinone + NADPH + (n+1) H(+)(in) = a plastoquinol + NADP(+) + n H(+)(out). Functionally, NDH shuttles electrons from NAD(P)H:plastoquinone, via FMN and iron-sulfur (Fe-S) centers, to quinones in the photosynthetic chain and possibly in a chloroplast respiratory chain. The immediate electron acceptor for the enzyme in this species is believed to be plastoquinone. Couples the redox reaction to proton translocation, and thus conserves the redox energy in a proton gradient. The protein is NAD(P)H-quinone oxidoreductase subunit J, chloroplastic of Nuphar advena (Common spatterdock).